The chain runs to 148 residues: Large ribosomal subunit protein bL9 (148 aa).

Belongs to the bacterial ribosomal protein bL9 family.

Its function is as follows. Binds to the 23S rRNA. The sequence is that of Large ribosomal subunit protein bL9 from Acidithiobacillus ferrooxidans (strain ATCC 23270 / DSM 14882 / CIP 104768 / NCIMB 8455) (Ferrobacillus ferrooxidans (strain ATCC 23270)).